Reading from the N-terminus, the 121-residue chain is Non-structural protein 8 (121 aa).

An N-terminal signal peptide occupies residues 1-15 (MKLLIVFGLLASVYC). The SARS ORF8 Ig-like domain maps to 19–121 (ECSIQECCEN…HDVRVVLDFI (103 aa)). Intrachain disulfides connect Cys-25-Cys-90, Cys-37-Cys-102, and Cys-61-Cys-83.

This Bat coronavirus HKU3 (BtCoV) protein is Non-structural protein 8.